A 133-amino-acid polypeptide reads, in one-letter code: Small ribosomal subunit protein uS9 (133 aa).

Residues 97–133 are disordered; it reads MKQELKSQGFLTRDPRKKERKKYGRKKARKSFQFSKR. The segment covering 114 to 133 has biased composition (basic residues); sequence KERKKYGRKKARKSFQFSKR.

The protein belongs to the universal ribosomal protein uS9 family.

The protein is Small ribosomal subunit protein uS9 (rpsI) of Chlamydia muridarum (strain MoPn / Nigg).